We begin with the raw amino-acid sequence, 108 residues long: Large ribosomal subunit protein uL24 (108 aa).

Belongs to the universal ribosomal protein uL24 family. In terms of assembly, part of the 50S ribosomal subunit.

In terms of biological role, one of two assembly initiator proteins, it binds directly to the 5'-end of the 23S rRNA, where it nucleates assembly of the 50S subunit. Its function is as follows. One of the proteins that surrounds the polypeptide exit tunnel on the outside of the subunit. In Mycoplasmopsis synoviae (strain 53) (Mycoplasma synoviae), this protein is Large ribosomal subunit protein uL24.